Reading from the N-terminus, the 396-residue chain is L-lactate dehydrogenase (396 aa).

One can recognise an FMN hydroxy acid dehydrogenase domain in the interval 1–380 (MIISAASDYR…TQDSLVQGLG (380 aa)). Substrate is bound at residue Y24. Residues S106 and Q127 each coordinate FMN. Residue Y129 participates in substrate binding. FMN is bound at residue T155. Residue R164 coordinates substrate. K251 provides a ligand contact to FMN. H275 serves as the catalytic Proton acceptor. R278 serves as a coordination point for substrate. Position 306–330 (306–330 (DSGIRNGLDVVRMIALGADTVLLGR)) interacts with FMN.

Belongs to the FMN-dependent alpha-hydroxy acid dehydrogenase family. Requires FMN as cofactor.

The protein resides in the cell inner membrane. It carries out the reaction (S)-lactate + A = pyruvate + AH2. In terms of biological role, catalyzes the conversion of L-lactate to pyruvate. Is coupled to the respiratory chain. The sequence is that of L-lactate dehydrogenase from Escherichia coli O127:H6 (strain E2348/69 / EPEC).